The sequence spans 674 residues: Secretin GspD (674 aa).

The N-terminal stretch at 1-24 is a signal peptide; it reads MKYWLKKSSWLLAGSLLSTPLAMA. The N0 stretch occupies residues 25–121; that stretch reads NEFSASFKGT…VLSGEERANG (97 aa). Positions 123–187 are N1; sequence EVITQVVAVK…EIIRRVDQAG (65 aa). The N2 stretch occupies residues 188 to 261; it reads DKEIEVVELN…LIKQLDVEMA (74 aa). An N3 region spans residues 264-338; it reads GNNRVVYLKY…AMLEVIGQLD (75 aa). The tract at residues 343–612 is secretin; the sequence is QVLIEALIVE…VFIKPTIIRD (270 aa). Residues 395 to 417 form a cap gate region; that stretch reads DTTQTKAVYDTNNNFLRNETTTT. Positions 614–674 are s domain; the sequence is VTADGITQRK…AFIEQMEAKQ (61 aa).

Belongs to the bacterial secretin family. GSP D subfamily. As to quaternary structure, forms a cylindrical channel with 15 subunits; unlike E.coli no 16-subunit channels are seen. The closed pentadeacameric channels are 195 Angstroms long and 145 Angstroms in diameter. Each subunit turns in a clock-wise manner around the channel.

Its subcellular location is the cell outer membrane. Its function is as follows. Involved in a type II secretion system (T2SS, formerly general secretion pathway, GSP) for the export of proteins. Required for secretion of cholera toxin through the outer membrane. This subunit forms the outer membrane channel. The sequence is that of Secretin GspD (epsD) from Vibrio cholerae serotype O1 (strain ATCC 39315 / El Tor Inaba N16961).